Consider the following 653-residue polypeptide: Probable sulfate transporter 3.4 (653 aa).

At 1–92 the chain is on the cytoplasmic side; it reads MGHGTNRVED…QYDLKLLRSD (92 aa). The chain crosses the membrane as a helical span at residues 93–113; that stretch reads VISGLTIASLAIPQGISYAKL. Residues 114–115 lie on the Extracellular side of the membrane; the sequence is AN. A helical membrane pass occupies residues 116 to 136; the sequence is LPPIVGLYSSFVPPLIYAVLG. The Cytoplasmic portion of the chain corresponds to 137 to 140; that stretch reads SSRH. The helical transmembrane segment at 141–161 threads the bilayer; that stretch reads LAVGPVSIASLVMGSMLSESV. Residues 162–167 lie on the Extracellular side of the membrane; it reads SPTQDS. The chain crosses the membrane as a helical span at residues 168 to 188; it reads ILYLKLAFTSTFFAGVFQASL. Topologically, residues 189-194 are cytoplasmic; sequence GLLRLG. Residues 195-215 form a helical membrane-spanning segment; that stretch reads FMIDFLSKATLIGFTAGAAVI. At 216-247 the chain is on the extracellular side; the sequence is VSLQQLKGLLGIVHFTGKMQIVPVMSSVFNHR. The helical transmembrane segment at 248 to 268 threads the bilayer; sequence SEWSWETIVMGIGFLSILLTT. The Cytoplasmic segment spans residues 269-279; it reads RHISMRKPKLF. The helical transmembrane segment at 280–300 threads the bilayer; it reads WISAASPLASVIISTLLVYLI. The Extracellular segment spans residues 301–331; that stretch reads RSKTHAISFIGHLPKGLNPPSLNMLYFSGAH. Residues 332-352 traverse the membrane as a helical segment; it reads LALAIKTGIITGILSLTEGIA. Topologically, residues 353-370 are cytoplasmic; that stretch reads VGRTFASLKNYQVNGNKE. Residues 371–391 traverse the membrane as a helical segment; the sequence is MMAIGFMNMAGSCTSCYVTTG. At 392-407 the chain is on the extracellular side; that stretch reads SFSRSAVNYNAGAKTA. Residues 408-428 form a helical membrane-spanning segment; sequence VSNIVMASAVLVTLLFLMPLF. Over 429–433 the chain is Cytoplasmic; sequence YYTPN. A helical membrane pass occupies residues 434 to 454; sequence VILAAIILTAVIGLIDYQAAY. Residues 455 to 471 lie on the Extracellular side of the membrane; it reads KLWKVDKFDFFTCLCSF. The chain crosses the membrane as a helical span at residues 472–492; that stretch reads FGVLFVSVPLGLAIAVAVSVI. The Cytoplasmic segment spans residues 493-653; the sequence is KILLHVTRPN…SSTWKANGQP (161 aa). Residues 520–643 form the STAS domain; the sequence is RYREASRIPG…LTVGEAVADL (124 aa).

This sequence belongs to the SLC26A/SulP transporter (TC 2.A.53) family.

The protein localises to the membrane. In terms of biological role, h(+)/sulfate cotransporter that may play a role in the regulation of sulfate assimilation. The protein is Probable sulfate transporter 3.4 (SULTR3;4) of Arabidopsis thaliana (Mouse-ear cress).